A 1086-amino-acid chain; its full sequence is Ribonuclease 3 (1086 aa).

Disordered stretches follow at residues 1-77 (MSDE…DSPR) and 158-233 (CHSM…LRNF). A compositionally biased stretch (basic residues) spans 13-23 (PKHKRARRKKY). The span at 24–35 (QKEYQERHKEEM) shows a compositional bias: basic and acidic residues. A compositionally biased stretch (polar residues) spans 43 to 53 (FQNQPSTSSAP). The segment covering 159–168 (HSMKGRKTPK) has biased composition (basic residues). Residues 181–190 (VSDDSNDSQD) show a composition bias toward acidic residues. Residues 191–201 (EASTSEPTNRQ) show a composition bias toward polar residues. The span at 203–217 (PEADKTGEVKDEKQT) shows a compositional bias: basic and acidic residues. 2 RNase III domains span residues 607 to 781 (LDVF…LDGG) and 833 to 957 (FHAL…VDRG). Mg(2+) contacts are provided by Glu-694, Asn-767, Glu-770, Glu-873, Asp-943, and Glu-946. The 76-residue stretch at 984 to 1059 (DAKSHLQQWC…AELALANLES (76 aa)) folds into the DRBM domain.

It belongs to the ribonuclease III family. The cofactor is Mg(2+). Requires Mn(2+) as cofactor.

The protein localises to the nucleus. It catalyses the reaction Endonucleolytic cleavage to 5'-phosphomonoester.. In terms of biological role, executes the initial step of microRNA (miRNA) processing in the nucleus, that is the cleavage of pri-miRNA to release pre-miRNA. Involved in pre-rRNA processing. Cleaves double-strand RNA and does not cleave single-strand RNA. Involved in fertility. Required for the function or synthesis of the let-7 miRNA. This Caenorhabditis elegans protein is Ribonuclease 3 (drsh-1).